The sequence spans 389 residues: S-adenosylmethionine synthase (389 aa).

ATP is bound at residue His-15. Mg(2+) is bound at residue Asp-17. K(+) is bound at residue Glu-43. The L-methionine site is built by Glu-56 and Gln-99. The segment at 99 to 109 is flexible loop; the sequence is QSPDIAQGVNE. ATP-binding positions include 166-168, 234-235, Asp-243, 249-250, Ala-266, and Lys-270; these read DAK, RF, and RK. Asp-243 lines the L-methionine pocket. Residue Lys-274 participates in L-methionine binding.

The protein belongs to the AdoMet synthase family. In terms of assembly, homotetramer; dimer of dimers. Requires Mg(2+) as cofactor. It depends on K(+) as a cofactor.

The protein resides in the cytoplasm. It carries out the reaction L-methionine + ATP + H2O = S-adenosyl-L-methionine + phosphate + diphosphate. It functions in the pathway amino-acid biosynthesis; S-adenosyl-L-methionine biosynthesis; S-adenosyl-L-methionine from L-methionine: step 1/1. Functionally, catalyzes the formation of S-adenosylmethionine (AdoMet) from methionine and ATP. The overall synthetic reaction is composed of two sequential steps, AdoMet formation and the subsequent tripolyphosphate hydrolysis which occurs prior to release of AdoMet from the enzyme. The sequence is that of S-adenosylmethionine synthase from Neisseria gonorrhoeae (strain NCCP11945).